The chain runs to 197 residues: Large ribosomal subunit protein uL11 (197 aa).

The protein belongs to the universal ribosomal protein uL11 family. Part of the ribosomal stalk of the 50S ribosomal subunit. Interacts with L10 and the large rRNA to form the base of the stalk. L10 forms an elongated spine to which L12 dimers bind in a sequential fashion forming a multimeric L10(L12)X complex. One or more lysine residues are methylated.

Functionally, forms part of the ribosomal stalk which helps the ribosome interact with GTP-bound translation factors. This chain is Large ribosomal subunit protein uL11, found in Mycoplasmopsis pulmonis (strain UAB CTIP) (Mycoplasma pulmonis).